We begin with the raw amino-acid sequence, 217 residues long: N-(5'-phosphoribosyl)anthranilate isomerase (217 aa).

This sequence belongs to the TrpF family.

The enzyme catalyses N-(5-phospho-beta-D-ribosyl)anthranilate = 1-(2-carboxyphenylamino)-1-deoxy-D-ribulose 5-phosphate. Its pathway is amino-acid biosynthesis; L-tryptophan biosynthesis; L-tryptophan from chorismate: step 3/5. In Synechococcus sp. (strain ATCC 27144 / PCC 6301 / SAUG 1402/1) (Anacystis nidulans), this protein is N-(5'-phosphoribosyl)anthranilate isomerase.